Consider the following 271-residue polypeptide: Urease accessory protein UreD (271 aa).

This sequence belongs to the UreD family. In terms of assembly, ureD, UreF and UreG form a complex that acts as a GTP-hydrolysis-dependent molecular chaperone, activating the urease apoprotein by helping to assemble the nickel containing metallocenter of UreC. The UreE protein probably delivers the nickel.

Its subcellular location is the cytoplasm. In terms of biological role, required for maturation of urease via the functional incorporation of the urease nickel metallocenter. The chain is Urease accessory protein UreD from Bacillus sp. (strain TB-90).